Here is a 220-residue protein sequence, read N- to C-terminus: UPF0319 protein YccT (220 aa).

The signal sequence occupies residues 1-20 (MKTGALATFLALCLPVTVFA).

This sequence belongs to the UPF0319 family.

The sequence is that of UPF0319 protein YccT from Salmonella enteritidis PT4 (strain P125109).